The sequence spans 304 residues: Calmodulin-lysine N-methyltransferase (304 aa).

It belongs to the class I-like SAM-binding methyltransferase superfamily. CLNMT methyltransferase family. Monomer. As to expression, expressed in discreet spatial and tissue-specific patterns including root tips, leaves-tips, floral buds, stamens, hydathodes, stigma, anther, siliques, apical meristems and germinating seeds. Also observed at high levels in the root stele region.

It is found in the cytoplasm. The protein localises to the nucleus. The catalysed reaction is [calmodulin]-L-lysine + S-adenosyl-L-methionine = [calmodulin]-N(6)-methyl-L-lysine + S-adenosyl-L-homocysteine + H(+). Functionally, catalyzes the trimethylation of calmodulin. Regulates roots development probably by modulating auxin signaling responses. May be involved in gravitropism. Involved in abscisic acid (ABA)-mediated and abiotic stress responses, including salt (NaCl), cold, drought and heat stresses. The chain is Calmodulin-lysine N-methyltransferase from Arabidopsis thaliana (Mouse-ear cress).